Here is a 157-residue protein sequence, read N- to C-terminus: Snaclec 3 (157 aa).

The N-terminal stretch at 1–23 (MGRLIFLSFGWLVVFLSLSGTGA) is a signal peptide. Intrachain disulfides connect Cys-27–Cys-38, Cys-55–Cys-153, and Cys-128–Cys-145. The region spanning 34–154 (YGQHCYRAFS…CAGHYPFICK (121 aa)) is the C-type lectin domain.

It belongs to the snaclec family. In terms of assembly, heterodimer; disulfide-linked. Expressed by the venom gland.

Its subcellular location is the secreted. Interferes with one step of hemostasis (modulation of platelet aggregation, or coagulation cascade, for example). The chain is Snaclec 3 from Bitis gabonica (Gaboon adder).